A 321-amino-acid chain; its full sequence is Beta-ketoacyl-[acyl-carrier-protein] synthase III (321 aa).

Active-site residues include cysteine 114 and histidine 248. The interval 249-253 is ACP-binding; the sequence is QANIR. Asparagine 278 is an active-site residue.

The protein belongs to the thiolase-like superfamily. FabH family. In terms of assembly, homodimer.

It is found in the cytoplasm. The catalysed reaction is malonyl-[ACP] + acetyl-CoA + H(+) = 3-oxobutanoyl-[ACP] + CO2 + CoA. The protein operates within lipid metabolism; fatty acid biosynthesis. Catalyzes the condensation reaction of fatty acid synthesis by the addition to an acyl acceptor of two carbons from malonyl-ACP. Catalyzes the first condensation reaction which initiates fatty acid synthesis and may therefore play a role in governing the total rate of fatty acid production. Possesses both acetoacetyl-ACP synthase and acetyl transacylase activities. Its substrate specificity determines the biosynthesis of branched-chain and/or straight-chain of fatty acids. The protein is Beta-ketoacyl-[acyl-carrier-protein] synthase III of Methylococcus capsulatus (strain ATCC 33009 / NCIMB 11132 / Bath).